We begin with the raw amino-acid sequence, 281 residues long: Polyamine aminopropyltransferase (281 aa).

In terms of domain architecture, PABS spans 2 to 237 (EIWYTEKLEL…GIIGFTFLSN (236 aa)). Q33 is a binding site for S-methyl-5'-thioadenosine. H64 and D88 together coordinate spermidine. S-methyl-5'-thioadenosine is bound by residues E108 and 139–140 (DG). Catalysis depends on D157, which acts as the Proton acceptor. Residue 157–160 (DSSD) participates in spermidine binding. P164 contributes to the S-methyl-5'-thioadenosine binding site.

This sequence belongs to the spermidine/spermine synthase family. As to quaternary structure, homodimer or homotetramer.

Its subcellular location is the cytoplasm. The catalysed reaction is S-adenosyl 3-(methylsulfanyl)propylamine + putrescine = S-methyl-5'-thioadenosine + spermidine + H(+). It functions in the pathway amine and polyamine biosynthesis; spermidine biosynthesis; spermidine from putrescine: step 1/1. In terms of biological role, catalyzes the irreversible transfer of a propylamine group from the amino donor S-adenosylmethioninamine (decarboxy-AdoMet) to putrescine (1,4-diaminobutane) to yield spermidine. In Leptospira biflexa serovar Patoc (strain Patoc 1 / Ames), this protein is Polyamine aminopropyltransferase.